Consider the following 375-residue polypeptide: Alanine racemase (375 aa).

Lys38 serves as the catalytic Proton acceptor; specific for D-alanine. Residue Lys38 is modified to N6-(pyridoxal phosphate)lysine. A substrate-binding site is contributed by Arg137. Catalysis depends on Tyr266, which acts as the Proton acceptor; specific for L-alanine. Position 314 (Met314) interacts with substrate.

The protein belongs to the alanine racemase family. It depends on pyridoxal 5'-phosphate as a cofactor.

It catalyses the reaction L-alanine = D-alanine. It participates in amino-acid biosynthesis; D-alanine biosynthesis; D-alanine from L-alanine: step 1/1. Functionally, catalyzes the interconversion of L-alanine and D-alanine. May also act on other amino acids. The sequence is that of Alanine racemase (alr) from Cutibacterium acnes (strain DSM 16379 / KPA171202) (Propionibacterium acnes).